A 100-amino-acid polypeptide reads, in one-letter code: Small ribosomal subunit protein uS14c (100 aa).

Belongs to the universal ribosomal protein uS14 family. In terms of assembly, part of the 30S ribosomal subunit.

Its subcellular location is the plastid. In terms of biological role, binds 16S rRNA, required for the assembly of 30S particles. The chain is Small ribosomal subunit protein uS14c from Aneura mirabilis (Parasitic liverwort).